Here is a 241-residue protein sequence, read N- to C-terminus: uncharacterized protein (241 aa).

The GGDEF domain occupies 84–216; sequence TVVSLVVCDL…APGPVVAGRD (133 aa). Residues 215 to 241 form a disordered region; sequence RDGEVVRLADSPPKSAHDRRRLRGNRP. Residues 231-241 show a composition bias toward basic residues; that stretch reads HDRRRLRGNRP.

This is an uncharacterized protein from Streptomyces griseus.